The chain runs to 1854 residues: PKS-NRPS hybrid synthetase ATPKS (1854 aa).

Residues phenylalanine 24–arginine 423 form an adenylation (A) domain region. In terms of domain architecture, Carrier 1 spans isoleucine 523–threonine 598. Serine 558 is subject to O-(pantetheine 4'-phosphoryl)serine. The 433-residue stretch at glycine 617–glutamate 1049 folds into the Ketosynthase family 3 (KS3) domain. Residues cysteine 791, histidine 926, and histidine 967 each act as for beta-ketoacyl synthase activity in the active site. Positions leucine 1162–valine 1496 are malonyl-CoA:ACP transacylase (MAT) domain. Residues lysine 1536–isoleucine 1556 form a disordered region. The span at serine 1537–glutamine 1555 shows a compositional bias: low complexity. Residues methionine 1776 to valine 1851 form the Carrier 2 domain. An O-(pantetheine 4'-phosphoryl)serine modification is found at serine 1811.

In the C-terminal section; belongs to the NRP synthetase family.

The protein operates within secondary metabolite biosynthesis. Functionally, PKS-NRPS hybrid synthetase; part of the gene cluster that mediates the biosynthesis of pyrophen and campyrone B, which represent a class of fungal amino acid-derived alpha-pyrone natural products. The first step of pyrophen biosynthesis is catalyzed by the PKS-NRPS hybrid synthetase ATPKS that uptakes and condensates L-phenylalanine and malonyl-CoA in order to produce desmethyldesacetylpyrophen. Although the A domain does not discriminate between 2 enantiomeric phenylalanines, the downstream KS domain must play a gate keeping role to stereoselectively accept the L-phenylalanyl-S-phosphopantetheine (Ppant)-T domain intermediate for chain elongation. The resulting amino acid derived diketide is off-loaded through lactonization to yield the alpha-pyrone intermediate desmethyldesacetylpyrophen. The cluster-specific O-methyltransferase (OMT) then methylates desmethyldesacetylpyrophen to desacetylpyrophen, which is further acetylated to pyrophen by an endogenous yet unidentified N-acetyltransferase. ATPKS has relaxed substrate specificity to activate and extend branched-chain amino acid L-leucine to produce small amounts of campyrone B. This chain is PKS-NRPS hybrid synthetase ATPKS, found in Aspergillus niger (strain ATCC 1015 / CBS 113.46 / FGSC A1144 / LSHB Ac4 / NCTC 3858a / NRRL 328 / USDA 3528.7).